The following is a 1058-amino-acid chain: Carbamoyl phosphate synthase large chain (1058 aa).

The carboxyphosphate synthetic domain stretch occupies residues 1-401; sequence MPKRTDIQKI…SLLKACRSLE (401 aa). 12 residues coordinate ATP: Arg-129, Arg-169, Gly-175, Gly-176, Arg-208, Ile-210, Glu-215, Gly-241, Ile-242, His-243, Gln-284, and Glu-298. The ATP-grasp 1 domain occupies 133 to 327; it reads KQLMEELEQP…IAKLAAKIAV (195 aa). Residues Gln-284, Glu-298, and Asn-300 each coordinate Mg(2+). Residues Gln-284, Glu-298, and Asn-300 each contribute to the Mn(2+) site. Positions 402–546 are oligomerization domain; sequence IGVHHNEIPE…YSTYGWENES (145 aa). A carbamoyl phosphate synthetic domain region spans residues 547–929; it reads IRSDKESVLV…ALYKAFEASY (383 aa). The 191-residue stretch at 671–861 folds into the ATP-grasp 2 domain; it reads EQALKELDIP…MAQVATKLIL (191 aa). ATP-binding residues include Arg-707, Ser-746, Ile-748, Glu-752, Gly-777, Val-778, His-779, Ser-780, Gln-820, and Glu-832. Gln-820, Glu-832, and Asn-834 together coordinate Mg(2+). The Mn(2+) site is built by Gln-820, Glu-832, and Asn-834. The region spanning 930–1058 is the MGS-like domain; that stretch reads LHLPTFGNVV…ESRSFVTEAI (129 aa). Residues 930–1058 form an allosteric domain region; the sequence is LHLPTFGNVV…ESRSFVTEAI (129 aa).

The protein belongs to the CarB family. Composed of two chains; the small (or glutamine) chain promotes the hydrolysis of glutamine to ammonia, which is used by the large (or ammonia) chain to synthesize carbamoyl phosphate. Tetramer of heterodimers (alpha,beta)4. The cofactor is Mg(2+). Mn(2+) is required as a cofactor.

The catalysed reaction is hydrogencarbonate + L-glutamine + 2 ATP + H2O = carbamoyl phosphate + L-glutamate + 2 ADP + phosphate + 2 H(+). It catalyses the reaction hydrogencarbonate + NH4(+) + 2 ATP = carbamoyl phosphate + 2 ADP + phosphate + 2 H(+). The protein operates within amino-acid biosynthesis; L-arginine biosynthesis; carbamoyl phosphate from bicarbonate: step 1/1. It participates in pyrimidine metabolism; UMP biosynthesis via de novo pathway; (S)-dihydroorotate from bicarbonate: step 1/3. Its function is as follows. Large subunit of the glutamine-dependent carbamoyl phosphate synthetase (CPSase). CPSase catalyzes the formation of carbamoyl phosphate from the ammonia moiety of glutamine, carbonate, and phosphate donated by ATP, constituting the first step of 2 biosynthetic pathways, one leading to arginine and/or urea and the other to pyrimidine nucleotides. The large subunit (synthetase) binds the substrates ammonia (free or transferred from glutamine from the small subunit), hydrogencarbonate and ATP and carries out an ATP-coupled ligase reaction, activating hydrogencarbonate by forming carboxy phosphate which reacts with ammonia to form carbamoyl phosphate. This Streptococcus pneumoniae (strain 70585) protein is Carbamoyl phosphate synthase large chain.